A 179-amino-acid polypeptide reads, in one-letter code: Tetratricopeptide repeat protein 36 (179 aa).

TPR repeat units lie at residues 43–76 (SLQLEREGVALAEGVRLDEAIEKFTKALEVCPKN), 78–110 (SAYNNRAQAYRLQNKPEKALDDLNEALSLAGPK), and 115–148 (CQAYVQRASIYRLRGDDDKARTDFASAAELGSSF).

This sequence belongs to the TTC36 family.

This is Tetratricopeptide repeat protein 36 from Caenorhabditis elegans.